Here is a 226-residue protein sequence, read N- to C-terminus: Ribonuclease 3 (226 aa).

Residues 7–129 (DARLQQALGY…LFGAVFLDAG (123 aa)) enclose the RNase III domain. Residue Glu42 participates in Mg(2+) binding. The active site involves Asp46. Mg(2+) is bound by residues Asp115 and Glu118. Residue Glu118 is part of the active site. Residues 156-226 (DPKTRLQEIL…ARQACAELQR (71 aa)) enclose the DRBM domain.

This sequence belongs to the ribonuclease III family. Homodimer. The cofactor is Mg(2+).

It localises to the cytoplasm. The catalysed reaction is Endonucleolytic cleavage to 5'-phosphomonoester.. Digests double-stranded RNA. Involved in the processing of primary rRNA transcript to yield the immediate precursors to the large and small rRNAs (23S and 16S). Processes some mRNAs, and tRNAs when they are encoded in the rRNA operon. Processes pre-crRNA and tracrRNA of type II CRISPR loci if present in the organism. The chain is Ribonuclease 3 from Thiobacillus denitrificans (strain ATCC 25259 / T1).